The sequence spans 385 residues: 1-deoxy-D-xylulose 5-phosphate reductoisomerase (385 aa).

Positions 10, 11, 12, 13, 36, 38, and 121 each coordinate NADPH. Lys122 serves as a coordination point for 1-deoxy-D-xylulose 5-phosphate. An NADPH-binding site is contributed by Glu123. Asp147 serves as a coordination point for Mn(2+). The 1-deoxy-D-xylulose 5-phosphate site is built by Ser148, Glu149, Ser173, and His196. Glu149 is a binding site for Mn(2+). Position 202 (Gly202) interacts with NADPH. Residues Ser209, Asn214, Lys215, and Glu218 each contribute to the 1-deoxy-D-xylulose 5-phosphate site. Residue Glu218 participates in Mn(2+) binding.

The protein belongs to the DXR family. Requires Mg(2+) as cofactor. The cofactor is Mn(2+).

The catalysed reaction is 2-C-methyl-D-erythritol 4-phosphate + NADP(+) = 1-deoxy-D-xylulose 5-phosphate + NADPH + H(+). The protein operates within isoprenoid biosynthesis; isopentenyl diphosphate biosynthesis via DXP pathway; isopentenyl diphosphate from 1-deoxy-D-xylulose 5-phosphate: step 1/6. Functionally, catalyzes the NADPH-dependent rearrangement and reduction of 1-deoxy-D-xylulose-5-phosphate (DXP) to 2-C-methyl-D-erythritol 4-phosphate (MEP). The polypeptide is 1-deoxy-D-xylulose 5-phosphate reductoisomerase (Exiguobacterium sp. (strain ATCC BAA-1283 / AT1b)).